Consider the following 441-residue polypeptide: AP-2 complex subunit mu (441 aa).

The MHD domain occupies 174–440 (RNELFLDVIE…IGRSGLYETR (267 aa)).

The protein belongs to the adapter complexes medium subunit family. In terms of assembly, adapter protein complex 2 (AP-2) is a heterotetramer composed of two large adaptins (alpha-type subunit and beta-type subunits), a medium adaptin (mu-type subunit AP50) and a small adaptin (sigma-type subunit AP17). In terms of tissue distribution, brain, heart, lung, liver, testis and spleen.

Its subcellular location is the cell membrane. It is found in the membrane. The protein localises to the coated pit. Component of the adapter complexes which link clathrin to receptors in coated vesicles. Clathrin-associated protein complexes are believed to interact with the cytoplasmic tails of membrane proteins, leading to their selection and concentration. AP50 is a subunit of the plasma membrane adapter. Essential wnt/egl-20 signaling protein that functions in wnt/egl-20-producing cells. Required for the AP-2 complex-mediated endocytosis of membrane proteins including wntless homolog mig-14 in egl-20-producing cells. During development, regulates the migration of HSN neurons and the left and right Q neuroblasts (QL and QR, respectively) and their descendants, possibly through hox gene and wnt/egl-20 gene target mab-5, and plays a role in establishing ALM and PLM neuronal cell polarity. Regulates AWB sensory neuron cilia membrane expansion during development, potentially via localization of tub-1 and PtdIns(4,5)P2 to the ciliary base. Required for the asymmetric divisions of V5 cells. The sequence is that of AP-2 complex subunit mu (dpy-23) from Caenorhabditis elegans.